Here is a 178-residue protein sequence, read N- to C-terminus: Crossover junction endodeoxyribonuclease RuvC (178 aa).

Residues aspartate 11, glutamate 71, and aspartate 143 contribute to the active site. Residues aspartate 11, glutamate 71, and aspartate 143 each contribute to the Mg(2+) site.

Belongs to the RuvC family. Homodimer which binds Holliday junction (HJ) DNA. The HJ becomes 2-fold symmetrical on binding to RuvC with unstacked arms; it has a different conformation from HJ DNA in complex with RuvA. In the full resolvosome a probable DNA-RuvA(4)-RuvB(12)-RuvC(2) complex forms which resolves the HJ. It depends on Mg(2+) as a cofactor.

The protein resides in the cytoplasm. It carries out the reaction Endonucleolytic cleavage at a junction such as a reciprocal single-stranded crossover between two homologous DNA duplexes (Holliday junction).. The RuvA-RuvB-RuvC complex processes Holliday junction (HJ) DNA during genetic recombination and DNA repair. Endonuclease that resolves HJ intermediates. Cleaves cruciform DNA by making single-stranded nicks across the HJ at symmetrical positions within the homologous arms, yielding a 5'-phosphate and a 3'-hydroxyl group; requires a central core of homology in the junction. The consensus cleavage sequence is 5'-(A/T)TT(C/G)-3'. Cleavage occurs on the 3'-side of the TT dinucleotide at the point of strand exchange. HJ branch migration catalyzed by RuvA-RuvB allows RuvC to scan DNA until it finds its consensus sequence, where it cleaves and resolves the cruciform DNA. The sequence is that of Crossover junction endodeoxyribonuclease RuvC from Neisseria meningitidis serogroup C / serotype 2a (strain ATCC 700532 / DSM 15464 / FAM18).